The chain runs to 332 residues: Formamidase (332 aa).

In terms of domain architecture, CN hydrolase spans 14-259 (FLTALIQYPV…WEIVTAEVYP (246 aa)). Catalysis depends on Glu-60, which acts as the Proton acceptor. Lys-132 (proton donor) is an active-site residue. Cys-165 (nucleophile) is an active-site residue.

The protein belongs to the carbon-nitrogen hydrolase superfamily. Aliphatic amidase family.

The enzyme catalyses formamide + H2O = formate + NH4(+). Its function is as follows. Is an aliphatic amidase with a restricted substrate specificity, as it only hydrolyzes formamide. The protein is Formamidase of Bacillus cereus (strain B4264).